We begin with the raw amino-acid sequence, 20 residues long: ADXQPGDSTDKLLAQKQDDV.

The tract at residues 1–20 (ADXQPGDSTDKLLAQKQDDV) is disordered.

The protein belongs to the tyrosinase family. Hemocyanin subfamily. Composed of 3 major subunits (IB, II and III) and 1 minor subunit (IA) which form homohexamers and heterohexamers. May also form larger structures. Hemolymph.

The protein resides in the secreted. The protein localises to the extracellular space. Its function is as follows. Hemocyanins are copper-containing oxygen carriers occurring freely dissolved in the hemolymph of many mollusks and arthropods. This chain is Hemocyanin subunit Ia, found in Panulirus japonicus (Japanese spiny lobster).